The following is a 213-amino-acid chain: Small ribosomal subunit protein uS4 (213 aa).

The tract at residues 16-53 is disordered; that stretch reads GTDLGLKSGVKPYDVKTKKSARPPGQHGVSRNKSSEYS. Positions 44–53 are enriched in polar residues; sequence VSRNKSSEYS. The S4 RNA-binding domain occupies 97–163; the sequence is SRLDNVVYRM…EKSREQLRIK (67 aa).

The protein belongs to the universal ribosomal protein uS4 family. Part of the 30S ribosomal subunit. Contacts protein S5. The interaction surface between S4 and S5 is involved in control of translational fidelity.

Its function is as follows. One of the primary rRNA binding proteins, it binds directly to 16S rRNA where it nucleates assembly of the body of the 30S subunit. With S5 and S12 plays an important role in translational accuracy. This chain is Small ribosomal subunit protein uS4, found in Psychrobacter arcticus (strain DSM 17307 / VKM B-2377 / 273-4).